Reading from the N-terminus, the 397-residue chain is MQLLGRVICFVVGILLSGGPTGTISAVDPEANMNVTEIIMHWGYPEHSVQTGDGYILGVHRIPHGRKNQFDKGPKPVVYLQWRHGFLADSSNWVTNIDNNSLGFILADAGFDVWMGNSRGNTWSRKHKTLSVSQDEYWAFSFDEMAKYDLPASINYILNKTGQEQLYNVGHSQGCTIGFIAFSQMPELAKKVKMFFALAPVLSLNFASGPMVKLGRLPDLLLEDLFGQKQFLPQSAMVKWLSTHICTHVIMKELCANIFFLICGFNEKNLNMSRVDVYTTHCPAGTSVQNMVHWTQVVKYHKLQAFDWGSSDKNYFHYNQSYPPLYSIKDMQLPTALWSGGKDWLADTSDINILLTEIPTLVYHKNIPEWDHLDFIWGLDAPWRLYNEVVSLMKKYQ.

The N-terminal stretch at 1–25 (MQLLGRVICFVVGILLSGGPTGTIS) is a signal peptide. A propeptide spans 26 to 72 (AVDPEANMNVTEIIMHWGYPEHSVQTGDGYILGVHRIPHGRKNQFDK) (removed in mature form). 3 N-linked (GlcNAc...) asparagine glycosylation sites follow: Asn34, Asn99, and Asn159. In terms of domain architecture, AB hydrolase-1 spans 84–378 (HGFLADSSNW…EWDHLDFIWG (295 aa)). Ser172 functions as the Charge relay system in the catalytic mechanism. N-linked (GlcNAc...) asparagine glycosylation is found at Asn271 and Asn319. Residue His372 is the Charge relay system of the active site.

The protein belongs to the AB hydrolase superfamily. Lipase family. As to quaternary structure, monomer. In terms of processing, glycosylation is not essential for catalytic activity.

It localises to the lysosome. The catalysed reaction is a sterol ester + H2O = a sterol + a fatty acid + H(+). It catalyses the reaction cholesteryl (9Z-octadecenoate) + H2O = cholesterol + (9Z)-octadecenoate + H(+). It carries out the reaction a triacylglycerol + H2O = a 1,2-diacylglycerol + a fatty acid + H(+). The enzyme catalyses 1,2-di-(9Z-octadecenoyl)-glycerol + (9Z)-octadecenoate + H(+) = 1,2,3-tri-(9Z-octadecenoyl)-glycerol + H2O. The catalysed reaction is a 1,2-diacylglycerol + H2O = a 1-acylglycerol + a fatty acid + H(+). It catalyses the reaction 1,2-di-(9Z-octadecenoyl)-glycerol + H2O = 1-(9Z-octadecenoyl)-glycerol + (9Z)-octadecenoate + H(+). It carries out the reaction a 1,3-diacylglycerol + H2O = a 1-acylglycerol + a fatty acid + H(+). The enzyme catalyses 1,3-di-(9Z-octadecenoyl)-glycerol + H2O = 1-(9Z-octadecenoyl)-glycerol + (9Z)-octadecenoate + H(+). Catalyzes the deacylation of cholesteryl ester core lipids of endocytosed low density lipoproteins to generate free fatty acids and cholesterol. Hydrolyzes triglycerides (1,2,3-triacylglycerol) and diglycerides (such as 1,2-diacylglycerol and 1,3-diacylglycerol) with preference for the acyl moieties at the sn-1 or sn-3 positions. This is Lysosomal acid lipase/cholesteryl ester hydrolase (Lipa) from Rattus norvegicus (Rat).